Here is a 127-residue protein sequence, read N- to C-terminus: Ribosome-binding factor A (127 aa).

Belongs to the RbfA family. As to quaternary structure, monomer. Binds 30S ribosomal subunits, but not 50S ribosomal subunits or 70S ribosomes.

The protein localises to the cytoplasm. Its function is as follows. One of several proteins that assist in the late maturation steps of the functional core of the 30S ribosomal subunit. Associates with free 30S ribosomal subunits (but not with 30S subunits that are part of 70S ribosomes or polysomes). Required for efficient processing of 16S rRNA. May interact with the 5'-terminal helix region of 16S rRNA. This Stenotrophomonas maltophilia (strain R551-3) protein is Ribosome-binding factor A.